The chain runs to 217 residues: 3,4-dihydroxy-2-butanone 4-phosphate synthase (217 aa).

D-ribulose 5-phosphate is bound by residues 37–38 (RE), aspartate 42, 150–154 (RGGHT), and glutamate 174. Glutamate 38 provides a ligand contact to Mg(2+). Position 153 (histidine 153) interacts with Mg(2+).

The protein belongs to the DHBP synthase family. In terms of assembly, homodimer. Mg(2+) is required as a cofactor. The cofactor is Mn(2+).

It catalyses the reaction D-ribulose 5-phosphate = (2S)-2-hydroxy-3-oxobutyl phosphate + formate + H(+). Its pathway is cofactor biosynthesis; riboflavin biosynthesis; 2-hydroxy-3-oxobutyl phosphate from D-ribulose 5-phosphate: step 1/1. Its function is as follows. Catalyzes the conversion of D-ribulose 5-phosphate to formate and 3,4-dihydroxy-2-butanone 4-phosphate. This is 3,4-dihydroxy-2-butanone 4-phosphate synthase from Salmonella paratyphi A (strain ATCC 9150 / SARB42).